The primary structure comprises 681 residues: DNA-directed RNA polymerase subunit beta' (681 aa).

Residues cysteine 69, cysteine 71, cysteine 87, and cysteine 90 each coordinate Zn(2+). Mg(2+) contacts are provided by aspartate 489, aspartate 491, and aspartate 493.

Belongs to the RNA polymerase beta' chain family. RpoC1 subfamily. In terms of assembly, in plastids the minimal PEP RNA polymerase catalytic core is composed of four subunits: alpha, beta, beta', and beta''. When a (nuclear-encoded) sigma factor is associated with the core the holoenzyme is formed, which can initiate transcription. It depends on Mg(2+) as a cofactor. The cofactor is Zn(2+).

It localises to the plastid. The protein localises to the chloroplast. It catalyses the reaction RNA(n) + a ribonucleoside 5'-triphosphate = RNA(n+1) + diphosphate. Functionally, DNA-dependent RNA polymerase catalyzes the transcription of DNA into RNA using the four ribonucleoside triphosphates as substrates. The polypeptide is DNA-directed RNA polymerase subunit beta' (Nicotiana tomentosiformis (Tobacco)).